Reading from the N-terminus, the 1166-residue chain is MINRDNKKAITKKGMISNRLNKFSIRKYTVGTASILVGTTLIFGLGNQEAKAAENTSTENAKQDDATTSDNKEVVSETENNSTTENNSTNPIKKETNTDSQPEAKKESTSSSTQKQQNNVTATTETKPQNIEKENVKPSTDKTATEDTSVILEEKKAPNNTNNDVTTKPSTSEPSTSEIQTKPTTPQESTNIENSQPQPTPSKVDNQVTDATNPKEPVNVSKEELKKNPEKLKELVRNDSNTDHSTKPVATAPTSVAPKRVNAKMRFAVAQPAAVASNNVNDLIKVTKQTIKVGDGKDNVAAAHDGKDIEYDTEFTIDNKVKKGDTMTINYDKNVIPSDLTDKNDPIDITDPSGEVIAKGTFDKATKQITYTFTDYVDKYEDIKSRLTLYSYIDKKTVPNETSLNLTFATAGKETSQNVTVDYQDPMVHGDSNIQSIFTKLDEDKQTIEQQIYVNPLKKSATNTKVDIAGSQVDDYGNIKLGNGSTIIDQNTEIKVYKVNSDQQLPQSNRIYDFSQYEDVTSQFDNKKSFSNNVATLDFGDINSAYIIKVVSKYTPTSDGELDIAQGTSMRTTDKYGYYNYAGYSNFIVTSNDTGGGDGTVKPEEKLYKIGDYVWEDVDKDGVQGTDSKEKPMANVLVTLTYPDGTTKSVRTDANGHYEFGGLKDGETYTVKFETPTGYLPTKVNGTTDGEKDSNGSSVTVKINGKDDMSLDTGFYKEPKYNLGDYVWEDTNKDGIQDANEPGIKDVKVTLKDSTGKVIGTTTTDASGKYKFTDLDNGNYTVEFETPAGYTPTVKNTTADDKDSNGLTTTGVIKDADNMTLDRGFYKTPKYSLGDYVWYDSNKDGKQDSTEKGIKDVTVTLQNEKGEVIGTTKTDENGKYRFDNLDSGKYKVIFEKPAGLTQTVTNTTEDDKDADGGEVDVTITDHDDFTLDNGYFEEDTSDSDSDSDSDSDSDSDSDSDSDSDSDSDSDSDSDSDSDSDSDSDSDSDSDSDSDSDSDSDSDSDSDSDSDSDSDSDSDSDSDSDSDSDSDSDSDSDSDSDSDSDSDSDSDSDSDSDSDSDSDSDSDSDSDSDSDSDSDSDSDSDSDSDSDSDSDSDSDSDSDSDSDAGKHTPVKPMSTTKDHHNKAKALPETGSENNGSNNATLFGGLFAALGSLLLFGRRKKQNK.

An N-terminal signal peptide occupies residues 1–52; the sequence is MINRDNKKAITKKGMISNRLNKFSIRKYTVGTASILVGTTLIFGLGNQEAKA. Positions 23 to 34 match the YSIRK-G/S signaling motif motif; sequence FSIRKYTVGTAS. Residues 53–606 are ligand binding A region; it reads AENTSTENAK…GDGTVKPEEK (554 aa). The interval 54–253 is disordered; it reads ENTSTENAKQ…HSTKPVATAP (200 aa). Residues 61–75 are compositionally biased toward basic and acidic residues; the sequence is AKQDDATTSDNKEVV. Positions 77-90 are enriched in low complexity; sequence ETENNSTTENNSTN. Over residues 92-108 the composition is skewed to basic and acidic residues; that stretch reads IKKETNTDSQPEAKKES. The span at 118–129 shows a compositional bias: polar residues; that stretch reads NNVTATTETKPQ. Positions 130-145 are enriched in basic and acidic residues; that stretch reads NIEKENVKPSTDKTAT. Over residues 166–178 the composition is skewed to low complexity; sequence TTKPSTSEPSTSE. Residues 179-212 are compositionally biased toward polar residues; the sequence is IQTKPTTPQESTNIENSQPQPTPSKVDNQVTDAT. Over residues 221 to 246 the composition is skewed to basic and acidic residues; the sequence is SKEELKKNPEKLKELVRNDSNTDHST. CNA-B domains lie at 607-719, 720-829, and 830-940; these read LYKI…YKEP, KYNL…YKTP, and KYSL…EEDT. Residues 904 to 1141 are disordered; sequence VTNTTEDDKD…TGSENNGSNN (238 aa). Composition is skewed to acidic residues over residues 908–918 and 935–1105; these read TEDDKDADGGE and YFEE…DSDS. The LPXTG sorting signal motif lies at 1129–1133; it reads LPETG. A Pentaglycyl murein peptidoglycan amidated threonine modification is found at Thr-1132. The propeptide at 1133-1166 is removed by sortase; it reads GSENNGSNNATLFGGLFAALGSLLLFGRRKKQNK.

It belongs to the serine-aspartate repeat-containing protein (SDr) family. Interacts with host complement factor H/CFAH (via C-terminus). Interacts with host complement regulator C4BPA.

The protein resides in the secreted. It is found in the cell wall. Cell surface-associated calcium-binding protein which plays an important role in adhesion and pathogenesis. Contributes to the resistance to killing by innate immune components in blood and thus attenuates bacterial clearance by interacting with host complement factor H/CFAH and modulating its activity. Also inhibits bacterial opsonization and killing by interacting with host complement regulator C4BPA and thus inhibiting classical complement pathway activation. The protein is Serine-aspartate repeat-containing protein E (sdrE) of Staphylococcus aureus (strain COL).